The sequence spans 423 residues: UPF0229 protein PST_0721 (423 aa).

The tract at residues 84–109 is disordered; it reads AGERIPRPQGGGGGQGAGQASNSGEG.

The protein belongs to the UPF0229 family.

In Stutzerimonas stutzeri (strain A1501) (Pseudomonas stutzeri), this protein is UPF0229 protein PST_0721.